The following is a 156-amino-acid chain: Phosphopantetheine adenylyltransferase (156 aa).

Thr-10 is a substrate binding site. ATP contacts are provided by residues Thr-10–Phe-11 and His-18. Positions 42, 74, and 88 each coordinate substrate. ATP-binding positions include Gly-89–Arg-91, Glu-99, and Asn-124–Ser-130.

Belongs to the bacterial CoaD family. In terms of assembly, homohexamer. Requires Mg(2+) as cofactor.

The protein resides in the cytoplasm. The catalysed reaction is (R)-4'-phosphopantetheine + ATP + H(+) = 3'-dephospho-CoA + diphosphate. Its pathway is cofactor biosynthesis; coenzyme A biosynthesis; CoA from (R)-pantothenate: step 4/5. Its function is as follows. Reversibly transfers an adenylyl group from ATP to 4'-phosphopantetheine, yielding dephospho-CoA (dPCoA) and pyrophosphate. The chain is Phosphopantetheine adenylyltransferase from Campylobacter concisus (strain 13826).